The following is a 78-amino-acid chain: Cytochrome c oxidase subunit 6b-3 (78 aa).

Positions 22 to 65 (TRHCFTRYIEFHRCTTAKGEDANECERFAKYYRALCPGEWVDKW) constitute a CHCH domain. The Cx9C motif motif lies at 25-35 (CFTRYIEFHRC). Intrachain disulfides connect C25–C57 and C35–C46. A Cx10C motif motif is present at residues 46 to 57 (CERFAKYYRALC).

This sequence belongs to the cytochrome c oxidase subunit 6B (TC 3.D.4.8) family. As to expression, expressed in the whole plant.

The protein localises to the mitochondrion. In terms of biological role, this protein is one of the nuclear-coded polypeptide chains of cytochrome c oxidase, the terminal oxidase in mitochondrial electron transport. This protein may be one of the heme-binding subunits of the oxidase. This Arabidopsis thaliana (Mouse-ear cress) protein is Cytochrome c oxidase subunit 6b-3 (COX6B-3).